A 685-amino-acid chain; its full sequence is Augmin complex subunit dgt5 (685 aa).

Coiled-coil stretches lie at residues 87 to 165 and 342 to 379; these read LQRY…NKIQ and NMRN…DLKL.

In terms of assembly, component of the augmin complex composed of dgt2, dgt3, dgt4, dgt5, dgt6, msd1, msd5 and wac. The complex interacts directly or indirectly with microtubules and is required for centrosome-independent generation of spindle microtubules.

The protein resides in the cytoplasm. It localises to the cytoskeleton. The protein localises to the spindle. It is found in the chromosome. Its subcellular location is the centromere. The protein resides in the kinetochore. It localises to the microtubule organizing center. The protein localises to the centrosome. Functionally, as part of the augmin complex, plays a role in centrosome-independent generation of spindle microtubules. The complex is required for mitotic spindle assembly through its involvement in localizing gamma-tubulin to spindle microtubules. In Drosophila melanogaster (Fruit fly), this protein is Augmin complex subunit dgt5.